A 307-amino-acid chain; its full sequence is Retron Ec86 putative ribosyltransferase/DNA-binding protein (307 aa).

Functionally, possible ribosyltransferase/DNA-binding component of antiviral defense system retron Ec86, composed of a non-coding RNA (ncRNA), a ribosyltransferase/DNA-binding protein and a reverse transcriptase (RT). Expression of the 3-gene retron confers protection against bacteriophages T5. At multiplicity of infection (MOI) of 0.02 cultures grow normally when infected with T5 without collapsing, at MOI 2 cultures enter growth stasis. The chain is Retron Ec86 putative ribosyltransferase/DNA-binding protein from Escherichia coli.